We begin with the raw amino-acid sequence, 247 residues long: Granzyme B(G,H) (247 aa).

The N-terminal stretch at 1–18 (MKILLLLLTLSLASRTKA) is a signal peptide. Residues 19-20 (GE) constitute a propeptide, activation peptide. A Peptidase S1 domain is found at 21-245 (IIGGHEVKPH…FLSWIKKTMK (225 aa)). A disulfide bridge connects residues cysteine 49 and cysteine 65. The active-site Charge relay system is the histidine 64. N-linked (GlcNAc...) asparagine glycosylation occurs at asparagine 71. Aspartate 108 serves as the catalytic Charge relay system. Cystine bridges form between cysteine 142–cysteine 209 and cysteine 173–cysteine 188. N-linked (GlcNAc...) asparagine glycosylation occurs at asparagine 182. Serine 203 serves as the catalytic Charge relay system.

This sequence belongs to the peptidase S1 family. Granzyme subfamily.

It localises to the secreted. It is found in the cytolytic granule. The catalysed reaction is Preferential cleavage: -Asp-|-Xaa- &gt;&gt; -Asn-|-Xaa- &gt; -Met-|-Xaa-, -Ser-|-Xaa-.. Inactivated by the serine protease inhibitor diisopropylfluorophosphate. Its function is as follows. Abundant protease in the cytosolic granules of cytotoxic T-cells and NK-cells which activates caspase-independent pyroptosis when delivered into the target cell through the immunological synapse. It cleaves after Asp. Once delivered into the target cell, acts by catalyzing cleavage of gasdermin-E (GSDME), releasing the pore-forming moiety of GSDME, thereby triggering pyroptosis and target cell death. Seems to be linked to an activation cascade of caspases (aspartate-specific cysteine proteases) responsible for apoptosis execution. Cleaves caspase-3 and -9 (CASP3 and CASP9, respectively) to give rise to active enzymes mediating apoptosis. Cleaves and activates CASP7 in response to bacterial infection, promoting plasma membrane repair. The sequence is that of Granzyme B(G,H) (Gzmb) from Mus musculus (Mouse).